Consider the following 1305-residue polypeptide: Contactin-associated protein-like 5 (1305 aa).

Residues 1–24 (MDSVPRLTGVFTLLLSGLWHLGSS) form the signal peptide. At 25–1236 (ATNYNCDDPL…PLTNAVRSDS (1212 aa)) the chain is on the extracellular side. The 145-residue stretch at 30–174 (CDDPLASLLS…IGMRVEVYGC (145 aa)) folds into the F5/8 type C domain. Cys30 and Cys174 are disulfide-bonded. Laminin G-like domains lie at 180–360 (VADF…TFSC) and 367–544 (PITF…IDLC). 3 N-linked (GlcNAc...) asparagine glycosylation sites follow: Asn282, Asn355, and Asn496. Residues Cys329 and Cys360 are joined by a disulfide bond. Intrachain disulfides connect Cys512/Cys544, Cys550/Cys561, Cys555/Cys570, and Cys572/Cys582. An EGF-like 1 domain is found at 546–583 (IKDRCLPNYCEHGGFCSQSWTTFYCNCSNTGYTGATCH). Positions 584–790 (NSLYEQSCEV…LRCYGDRHFW (207 aa)) constitute a Fibrinogen C-terminal domain. Asn622 is a glycosylation site (N-linked (GlcNAc...) asparagine). Positions 791-956 (NAVSFYTEAS…KVTSGVRPGC (166 aa)) constitute a Laminin G-like 3 domain. Disulfide bonds link Cys929-Cys956, Cys960-Cys973, Cys967-Cys982, Cys984-Cys994, and Cys1163-Cys1198. An EGF-like 2 domain is found at 957–995 (PGHCSTYGSICHNGGKCVEKYSGYFCDCTNSPYEGPFCK). Positions 1000–1198 (AVFEAGTSVT…VQGTLMESSC (199 aa)) constitute a Laminin G-like 4 domain. A helical membrane pass occupies residues 1237–1257 (AVIGGVIAVVIFIIFSIIGIM). Over 1258 to 1305 (TRFLYQHKQSHRTNQMKEKEYPENLDSSFRNDIDLQNTVSECKREYFI) the chain is Cytoplasmic.

The protein belongs to the neurexin family.

The protein resides in the membrane. In terms of biological role, may play a role in the correct development and proper functioning of the peripheral and central nervous system and be involved in cell adhesion and intercellular communication. The chain is Contactin-associated protein-like 5 (CNTNAP5) from Canis lupus familiaris (Dog).